Here is a 187-residue protein sequence, read N- to C-terminus: Calcium and integrin-binding family member 2 (187 aa).

EF-hand domains follow at residues 66 to 101 (RENP…LCES), 103 to 138 (PREL…LTKS), and 144 to 179 (EVVL…APDF). The Ca(2+) site is built by D116, N118, D120, D127, D157, D159, D161, K163, and D168.

In terms of assembly, monomer. Homodimer. Interacts with WHRN and MYO7A. Interacts with ITGA2B (via C-terminus cytoplasmic tail region); the interactions are stabilized/increased in a calcium and magnesium-dependent manner. Interacts with ITGA7 (via C-terminus cytoplasmic tail region); the interactions are stabilized/increased in a calcium and magnesium-dependent manner. Interacts with TMC1. Interacts with TMC2.

It is found in the cytoplasm. The protein resides in the cell projection. The protein localises to the stereocilium. Its subcellular location is the photoreceptor inner segment. It localises to the cilium. It is found in the photoreceptor outer segment. The protein resides in the cell membrane. The protein localises to the sarcolemma. Its function is as follows. Calcium- and integrin-binding protein that plays a role in intracellular calcium homeostasis. Acts as an auxiliary subunit of the sensory mechanoelectrical transduction (MET) channel in hair cells. Essential for mechanoelectrical transduction (MET) currents in auditory hair cells and thereby required for hearing. Regulates the function of hair cell mechanotransduction by controlling the distribution of transmembrane channel-like proteins TMC1 and TMC2, and by regulating the function of the MET channels in hair cells. Required for the maintenance of auditory hair cell stereocilia bundle morphology and function and for hair-cell survival in the cochlea. Critical for proper photoreceptor cell maintenance and function. Plays a role in intracellular calcium homeostasis by decreasing ATP-induced calcium release. This is Calcium and integrin-binding family member 2 (Cib2) from Rattus norvegicus (Rat).